A 126-amino-acid polypeptide reads, in one-letter code: Aspartate 1-decarboxylase (126 aa).

Residue serine 25 is the Schiff-base intermediate with substrate; via pyruvic acid of the active site. Position 25 is a pyruvic acid (Ser) (serine 25). Threonine 57 contacts substrate. Tyrosine 58 (proton donor) is an active-site residue. 73–75 (GAA) is a binding site for substrate.

The protein belongs to the PanD family. As to quaternary structure, heterooctamer of four alpha and four beta subunits. Pyruvate serves as cofactor. Post-translationally, is synthesized initially as an inactive proenzyme, which is activated by self-cleavage at a specific serine bond to produce a beta-subunit with a hydroxyl group at its C-terminus and an alpha-subunit with a pyruvoyl group at its N-terminus.

The protein resides in the cytoplasm. The catalysed reaction is L-aspartate + H(+) = beta-alanine + CO2. Its pathway is cofactor biosynthesis; (R)-pantothenate biosynthesis; beta-alanine from L-aspartate: step 1/1. Its function is as follows. Catalyzes the pyruvoyl-dependent decarboxylation of aspartate to produce beta-alanine. The chain is Aspartate 1-decarboxylase from Pseudomonas fluorescens.